Reading from the N-terminus, the 463-residue chain is Female germline-specific tumor suppressor gld-1 (463 aa).

The span at Met-1–Gly-10 shows a compositional bias: polar residues. The segment at Met-1–Leu-76 is disordered. Residues Val-11–Pro-31 are compositionally biased toward low complexity. The interval Pro-135–Ile-205 is qua1 domain; involved in homodimerization. The 53-residue stretch at Lys-208–Ala-260 folds into the KH domain. The qua2 domain; involved in RNA binding stretch occupies residues Ala-305 to Ala-336. Positions Asn-443–Phe-463 are disordered. The span at Ser-447–Ser-457 shows a compositional bias: low complexity.

As to quaternary structure, homodimer. Post-translationally, phosphorylated by cdk-2 which may negatively regulate its expression in distal mitotic germline cells. Undergoes proteasomal degradation in proximal oocytes following mating. Expressed in proximal and distal oocytes in female worms but is eliminated from proximal oocytes following mating.

In terms of biological role, RNA-binding protein which recognizes the 5'-UACUCAU-3' RNA consensus sequence. Binds sequences in both the 5'coding and the 3'-UTR region of rme-2 mRNA. Binds sequences in the 3'-UTR region of cye-1 mRNA. Binds to cyb-2.1, cyb-2.2 and cyb-3 mRNA. Binds sequences in the 3'-UTR region of tra-2 mRNA. Binds to the 3' UTR of Notch receptor homolog glp-1, thereby repressing glp-1 translation in the embryo. Binding to the glp-1 3' UTR is inhibited by pos-1 binding to an overlapping binding site in the glp-1 3' UTR. Germ line-specific tumor suppressor essential for oogenesis. Controls the spatial pattern of translation of multiple oogenesis specific mRNAs (e.g. yolk receptor rme-2) by repression of translation during early meiotic prophase (leptotene to pachytene) and then derepression of translation during diplotene/ diakinesis, following its degradation. Also functions to promote the male sexual fate in the hermaphrodite germline but not the male germline. Represses translation of the vacuolar ATPase component vha-13 in the distal gonad. Functions redundantly with gld-2 to promote the initiation of meiotic development and/or inhibit stem cell proliferation. By regulating cye-1 expression, prevents entry into mitosis in meiotic germline cells. The protein is Female germline-specific tumor suppressor gld-1 (gld-1) of Caenorhabditis elegans.